Consider the following 260-residue polypeptide: Hydroxyacylglutathione hydrolase (260 aa).

Zn(2+) is bound by residues His61, His63, Asp65, His66, His119, Asp138, and His176.

The protein belongs to the metallo-beta-lactamase superfamily. Glyoxalase II family. In terms of assembly, monomer. Requires Zn(2+) as cofactor.

The enzyme catalyses an S-(2-hydroxyacyl)glutathione + H2O = a 2-hydroxy carboxylate + glutathione + H(+). It functions in the pathway secondary metabolite metabolism; methylglyoxal degradation; (R)-lactate from methylglyoxal: step 2/2. Thiolesterase that catalyzes the hydrolysis of S-D-lactoyl-glutathione to form glutathione and D-lactic acid. This is Hydroxyacylglutathione hydrolase from Brucella suis (strain ATCC 23445 / NCTC 10510).